Reading from the N-terminus, the 446-residue chain is Na(+)-translocating NADH-quinone reductase subunit A (446 aa).

Belongs to the NqrA family. As to quaternary structure, composed of six subunits; NqrA, NqrB, NqrC, NqrD, NqrE and NqrF.

The catalysed reaction is a ubiquinone + n Na(+)(in) + NADH + H(+) = a ubiquinol + n Na(+)(out) + NAD(+). Functionally, NQR complex catalyzes the reduction of ubiquinone-1 to ubiquinol by two successive reactions, coupled with the transport of Na(+) ions from the cytoplasm to the periplasm. NqrA to NqrE are probably involved in the second step, the conversion of ubisemiquinone to ubiquinol. This is Na(+)-translocating NADH-quinone reductase subunit A from Aliivibrio salmonicida (strain LFI1238) (Vibrio salmonicida (strain LFI1238)).